A 359-amino-acid polypeptide reads, in one-letter code: GTPase Obg (359 aa).

Residues M1–L159 enclose the Obg domain. The region spanning A160–E328 is the OBG-type G domain. GTP contacts are provided by residues G166–S173, F191–V195, D213–G216, N280–D283, and S309–I311. Residues S173 and T193 each contribute to the Mg(2+) site.

This sequence belongs to the TRAFAC class OBG-HflX-like GTPase superfamily. OBG GTPase family. Monomer. Mg(2+) is required as a cofactor.

The protein resides in the cytoplasm. Functionally, an essential GTPase which binds GTP, GDP and possibly (p)ppGpp with moderate affinity, with high nucleotide exchange rates and a fairly low GTP hydrolysis rate. Plays a role in control of the cell cycle, stress response, ribosome biogenesis and in those bacteria that undergo differentiation, in morphogenesis control. This chain is GTPase Obg, found in Cyanothece sp. (strain PCC 7425 / ATCC 29141).